The following is a 245-amino-acid chain: Nodulation protein G (245 aa).

Position 11 to 35 (11 to 35 (VTGASGGIGEAIARVLHAQGAIVGL)) interacts with NAD(+). Ser-139 provides a ligand contact to substrate. Tyr-152 acts as the Proton acceptor in catalysis.

The protein belongs to the short-chain dehydrogenases/reductases (SDR) family.

Functionally, proposed to modify Nod factor fatty acyl chain. The protein is Nodulation protein G (nodG) of Rhizobium sp. (strain N33).